Here is a 338-residue protein sequence, read N- to C-terminus: Ketol-acid reductoisomerase (NADP(+)) (338 aa).

Residues 1 to 181 (MKVYYDKDCD…GGGRTGIIET (181 aa)) enclose the KARI N-terminal Rossmann domain. NADP(+) is bound by residues 24–27 (YGSQ), arginine 47, serine 50, threonine 52, and 82–85 (DEFQ). The active site involves histidine 107. Glycine 133 lines the NADP(+) pocket. The KARI C-terminal knotted domain maps to 182–327 (TFKDETETDL…EQLRAMMPWI (146 aa)). Positions 190, 194, 226, and 230 each coordinate Mg(2+). Residue serine 251 coordinates substrate.

This sequence belongs to the ketol-acid reductoisomerase family. It depends on Mg(2+) as a cofactor.

The enzyme catalyses (2R)-2,3-dihydroxy-3-methylbutanoate + NADP(+) = (2S)-2-acetolactate + NADPH + H(+). It catalyses the reaction (2R,3R)-2,3-dihydroxy-3-methylpentanoate + NADP(+) = (S)-2-ethyl-2-hydroxy-3-oxobutanoate + NADPH + H(+). The protein operates within amino-acid biosynthesis; L-isoleucine biosynthesis; L-isoleucine from 2-oxobutanoate: step 2/4. Its pathway is amino-acid biosynthesis; L-valine biosynthesis; L-valine from pyruvate: step 2/4. Its function is as follows. Involved in the biosynthesis of branched-chain amino acids (BCAA). Catalyzes an alkyl-migration followed by a ketol-acid reduction of (S)-2-acetolactate (S2AL) to yield (R)-2,3-dihydroxy-isovalerate. In the isomerase reaction, S2AL is rearranged via a Mg-dependent methyl migration to produce 3-hydroxy-3-methyl-2-ketobutyrate (HMKB). In the reductase reaction, this 2-ketoacid undergoes a metal-dependent reduction by NADPH to yield (R)-2,3-dihydroxy-isovalerate. The polypeptide is Ketol-acid reductoisomerase (NADP(+)) (Ectopseudomonas mendocina (strain ymp) (Pseudomonas mendocina)).